The primary structure comprises 1577 residues: Pentafunctional AROM polypeptide (1577 aa).

Positions 1–384 are 3-dehydroquinate synthase; sequence MSMKMADPTK…YEPKASVVSN (384 aa). Residues 48-50, 85-88, 116-118, and Asp-121 each bind NAD(+); these read DTN, ENSK, and GGV. Arg-132 lines the 7-phospho-2-dehydro-3-deoxy-D-arabino-heptonate pocket. 141–142 serves as a coordination point for NAD(+); the sequence is TT. Residues Asp-148 and Lys-154 each contribute to the 7-phospho-2-dehydro-3-deoxy-D-arabino-heptonate site. Residue Lys-163 coordinates NAD(+). Asn-164 provides a ligand contact to 7-phospho-2-dehydro-3-deoxy-D-arabino-heptonate. NAD(+)-binding positions include 181-184 and Asn-192; that span reads FIDT. Zn(2+) is bound at residue Glu-196. 7-phospho-2-dehydro-3-deoxy-D-arabino-heptonate-binding positions include 196 to 199 and Lys-250; that span reads EVIK. Glu-260 (proton acceptor; for 3-dehydroquinate synthase activity) is an active-site residue. 7-phospho-2-dehydro-3-deoxy-D-arabino-heptonate-binding positions include 264 to 268 and His-271; that span reads RNLLN. His-271 serves as a coordination point for Zn(2+). The active-site Proton acceptor; for 3-dehydroquinate synthase activity is the His-275. Residues His-287 and Lys-356 each coordinate 7-phospho-2-dehydro-3-deoxy-D-arabino-heptonate. His-287 is a binding site for Zn(2+). The EPSP synthase stretch occupies residues 397–842; that stretch reads VIPGVPKSLN…WDALKQKFGV (446 aa). Catalysis depends on Cys-824, which acts as the For EPSP synthase activity. A shikimate kinase region spans residues 864–1056; it reads NASVIIIGMR…RKKRLSFFVS (193 aa). 871–878 contacts ATP; that stretch reads GMRGAGKT. A 3-dehydroquinase region spans residues 1057-1277; the sequence is LTLPDLRDTG…AAPGQLSAAE (221 aa). The active-site Proton acceptor; for 3-dehydroquinate dehydratase activity is His-1180. Lys-1208 functions as the Schiff-base intermediate with substrate; for 3-dehydroquinate dehydratase activity in the catalytic mechanism. The segment at 1290 to 1577 is shikimate dehydrogenase; that stretch reads AKKFAIFGKP…RNAVLGTNEK (288 aa).

It in the N-terminal section; belongs to the sugar phosphate cyclases superfamily. Dehydroquinate synthase family. This sequence in the 2nd section; belongs to the EPSP synthase family. The protein in the 3rd section; belongs to the shikimate kinase family. In the 4th section; belongs to the type-I 3-dehydroquinase family. It in the C-terminal section; belongs to the shikimate dehydrogenase family. As to quaternary structure, homodimer. It depends on Zn(2+) as a cofactor.

It is found in the cytoplasm. It carries out the reaction 7-phospho-2-dehydro-3-deoxy-D-arabino-heptonate = 3-dehydroquinate + phosphate. The enzyme catalyses 3-dehydroquinate = 3-dehydroshikimate + H2O. It catalyses the reaction shikimate + NADP(+) = 3-dehydroshikimate + NADPH + H(+). The catalysed reaction is shikimate + ATP = 3-phosphoshikimate + ADP + H(+). It carries out the reaction 3-phosphoshikimate + phosphoenolpyruvate = 5-O-(1-carboxyvinyl)-3-phosphoshikimate + phosphate. It functions in the pathway metabolic intermediate biosynthesis; chorismate biosynthesis; chorismate from D-erythrose 4-phosphate and phosphoenolpyruvate: step 2/7. Its pathway is metabolic intermediate biosynthesis; chorismate biosynthesis; chorismate from D-erythrose 4-phosphate and phosphoenolpyruvate: step 3/7. It participates in metabolic intermediate biosynthesis; chorismate biosynthesis; chorismate from D-erythrose 4-phosphate and phosphoenolpyruvate: step 4/7. The protein operates within metabolic intermediate biosynthesis; chorismate biosynthesis; chorismate from D-erythrose 4-phosphate and phosphoenolpyruvate: step 5/7. It functions in the pathway metabolic intermediate biosynthesis; chorismate biosynthesis; chorismate from D-erythrose 4-phosphate and phosphoenolpyruvate: step 6/7. Its function is as follows. The AROM polypeptide catalyzes 5 consecutive enzymatic reactions in prechorismate polyaromatic amino acid biosynthesis. This chain is Pentafunctional AROM polypeptide, found in Talaromyces stipitatus (strain ATCC 10500 / CBS 375.48 / QM 6759 / NRRL 1006) (Penicillium stipitatum).